The chain runs to 60 residues: UPF0434 protein ETA_21370 (60 aa).

Belongs to the UPF0434 family.

In Erwinia tasmaniensis (strain DSM 17950 / CFBP 7177 / CIP 109463 / NCPPB 4357 / Et1/99), this protein is UPF0434 protein ETA_21370.